A 306-amino-acid chain; its full sequence is tRNA (guanine-N(7)-)-methyltransferase (306 aa).

Over residues 1–19 (MSSTAPLDSKATEQITTAA) the composition is skewed to polar residues. The segment at 1-65 (MSSTAPLDSK…EASPELPSDE (65 aa)) is disordered. Residues G121, 144–145 (EI), 180–181 (NA), and C200 contribute to the S-adenosyl-L-methionine site. D203 is an active-site residue. Residue 278 to 280 (TEE) coordinates S-adenosyl-L-methionine.

This sequence belongs to the class I-like SAM-binding methyltransferase superfamily. TrmB family. In terms of assembly, forms a complex with TRM82.

It localises to the nucleus. The catalysed reaction is guanosine(46) in tRNA + S-adenosyl-L-methionine = N(7)-methylguanosine(46) in tRNA + S-adenosyl-L-homocysteine. It participates in tRNA modification; N(7)-methylguanine-tRNA biosynthesis. Functionally, catalyzes the formation of N(7)-methylguanine at position 46 (m7G46) in tRNA. The sequence is that of tRNA (guanine-N(7)-)-methyltransferase from Lodderomyces elongisporus (strain ATCC 11503 / CBS 2605 / JCM 1781 / NBRC 1676 / NRRL YB-4239) (Yeast).